Reading from the N-terminus, the 458-residue chain is NADH-quinone oxidoreductase subunit N (458 aa).

A run of 14 helical transmembrane segments spans residues 2-22, 30-50, 71-91, 93-113, 118-138, 153-173, 196-216, 235-255, 261-281, 290-310, 319-339, 361-381, 397-417, and 438-458; these read LLLL…CFAL, IIYN…FKYS, IILL…ILVG, TLKF…FVAI, FLLL…LAGF, FILG…IYGF, LIIG…SSPL, FTAA…KLII, INYN…AFGA, LMAY…LLHN, LYIL…IMLF, IAAL…LTGF, FTLA…YLKV, and LLLI…IILF.

This sequence belongs to the complex I subunit 2 family. In terms of assembly, NDH-1 is composed of 14 different subunits. Subunits NuoA, H, J, K, L, M, N constitute the membrane sector of the complex.

It localises to the cell inner membrane. The enzyme catalyses a quinone + NADH + 5 H(+)(in) = a quinol + NAD(+) + 4 H(+)(out). Its function is as follows. NDH-1 shuttles electrons from NADH, via FMN and iron-sulfur (Fe-S) centers, to quinones in the respiratory chain. The immediate electron acceptor for the enzyme in this species is believed to be ubiquinone. Couples the redox reaction to proton translocation (for every two electrons transferred, four hydrogen ions are translocated across the cytoplasmic membrane), and thus conserves the redox energy in a proton gradient. The sequence is that of NADH-quinone oxidoreductase subunit N from Rickettsia prowazekii (strain Madrid E).